Reading from the N-terminus, the 353-residue chain is Heterogeneous nuclear ribonucleoproteins A2/B1 (353 aa).

M1 is subject to N-acetylmethionine. Phosphothreonine is present on T4. Positions 9-15 (PLERKKR) match the Nuclear localization signal motif. RRM domains lie at 21 to 104 (RKLF…ESGK) and 112 to 191 (KKLF…LSRQ). K22 participates in a covalent cross-link: Glycyl lysine isopeptide (Lys-Gly) (interchain with G-Cter in SUMO2). Phosphoserine is present on S29. An Omega-N-methylarginine modification is found at R38. Position 85 is a phosphoserine (S85). The residue at position 104 (K104) is an N6,N6-dimethyllysine; alternate. K104 participates in a covalent cross-link: Glycyl lysine isopeptide (Lys-Gly) (interchain with G-Cter in SUMO2); alternate. Residues K112, K120, and K137 each participate in a glycyl lysine isopeptide (Lys-Gly) (interchain with G-Cter in SUMO2) cross-link. Phosphothreonine is present on T140. S149 carries the phosphoserine modification. K152 participates in a covalent cross-link: Glycyl lysine isopeptide (Lys-Gly) (interchain with G-Cter in SUMO2). Phosphothreonine is present on T159. Residues K168 and K173 each participate in a glycyl lysine isopeptide (Lys-Gly) (interchain with G-Cter in SUMO2); alternate cross-link. N6-acetyllysine; alternate is present on residues K168 and K173. A Phosphothreonine modification is found at T176. K186 is covalently cross-linked (Glycyl lysine isopeptide (Lys-Gly) (interchain with G-Cter in SUMO2)). 2 positions are modified to phosphoserine: S189 and S201. The tract at residues 193–353 (MQEVQSSRSG…SGGYGGRSRY (161 aa)) is disordered. Gly residues predominate over residues 202–223 (GRGGNFGFGDSRGGGGNFGPGP). Position 203 is an asymmetric dimethylarginine; alternate (R203). A Dimethylated arginine; alternate modification is found at R203. R203 carries the post-translational modification Omega-N-methylarginine; alternate. S212 is modified (phosphoserine). The residue at position 213 (R213) is an Asymmetric dimethylarginine; alternate. The residue at position 213 (R213) is a Dimethylated arginine; alternate. R213 is modified (omega-N-methylarginine; alternate). Phosphoserine is present on S225. Position 228 is an omega-N-methylarginine (R228). A phosphoserine mark is found at S231 and S236. R238 is modified (omega-N-methylarginine). At S259 the chain carries Phosphoserine. R266 is subject to Asymmetric dimethylarginine; alternate. R266 is modified (omega-N-methylarginine; alternate). The tract at residues 308 to 347 (QQPSNYGPMKSGNFGGSRNMGGPYGGGNYGPGGSGGSGGY) is nuclear targeting sequence. Gly residues predominate over residues 320 to 353 (NFGGSRNMGGPYGGGNYGPGGSGGSGGYGGRSRY). S324 bears the Phosphoserine mark. R325 is modified (omega-N-methylarginine). At Y331 the chain carries Phosphotyrosine. Phosphoserine is present on residues S341 and S344. The residue at position 347 (Y347) is a Phosphotyrosine. R350 carries the post-translational modification Omega-N-methylarginine.

As to quaternary structure, identified in the spliceosome C complex. Identified in a IGF2BP1-dependent mRNP granule complex containing untranslated mRNAs. Interacts with IGF2BP1. Interacts with C9orf72. Interacts with DGCR8. Interacts with TARDBP. Interacts with CKAP5. Interacts with PPIA/CYPA. Interacts (via C-terminus) with FAM76B; the interaction results in retention of HNRNPA2B1 in the nucleus and inhibition of the NF-kappa-B-mediated inflammatory pathway. Interacts with NF-kappa-B inhibitors NFKBIA and NFKBIE; the interaction may be mediated by the RRM2 domain of HNRNPA2B1, and HNRNPA2B1 may interact simultaneously with FAM76B and either NFKBIA or NFKBIE to form a complex. In terms of processing, sumoylated in exosomes, promoting miRNAs-binding. Post-translationally, asymmetric dimethylation at Arg-266 constitutes the major methylation site. According to a report, methylation affects subcellular location and promotes nuclear localization. According to another report, methylation at Arg-266 does not influence nucleocytoplasmic shuttling.

It is found in the nucleus. Its subcellular location is the nucleoplasm. The protein resides in the cytoplasmic granule. It localises to the secreted. The protein localises to the extracellular exosome. Heterogeneous nuclear ribonucleoprotein (hnRNP) that associates with nascent pre-mRNAs, packaging them into hnRNP particles. The hnRNP particle arrangement on nascent hnRNA is non-random and sequence-dependent and serves to condense and stabilize the transcripts and minimize tangling and knotting. Packaging plays a role in various processes such as transcription, pre-mRNA processing, RNA nuclear export, subcellular location, mRNA translation and stability of mature mRNAs. Forms hnRNP particles with at least 20 other different hnRNP and heterogeneous nuclear RNA in the nucleus. Involved in transport of specific mRNAs to the cytoplasm in oligodendrocytes and neurons: acts by specifically recognizing and binding the A2RE (21 nucleotide hnRNP A2 response element) or the A2RE11 (derivative 11 nucleotide oligonucleotide) sequence motifs present on some mRNAs, and promotes their transport to the cytoplasm. Specifically binds single-stranded telomeric DNA sequences, protecting telomeric DNA repeat against endonuclease digestion. Also binds other RNA molecules, such as primary miRNA (pri-miRNAs): acts as a nuclear 'reader' of the N6-methyladenosine (m6A) mark by specifically recognizing and binding a subset of nuclear m6A-containing pri-miRNAs. Binding to m6A-containing pri-miRNAs promotes pri-miRNA processing by enhancing binding of DGCR8 to pri-miRNA transcripts. Involved in miRNA sorting into exosomes following sumoylation, possibly by binding (m6A)-containing pre-miRNAs. Acts as a regulator of efficiency of mRNA splicing, possibly by binding to m6A-containing pre-mRNAs. Plays a role in the splicing of pyruvate kinase PKM by binding repressively to sequences flanking PKM exon 9, inhibiting exon 9 inclusion and resulting in exon 10 inclusion and production of the PKM M2 isoform. In Pongo abelii (Sumatran orangutan), this protein is Heterogeneous nuclear ribonucleoproteins A2/B1 (HNRNPA2B1).